Here is a 437-residue protein sequence, read N- to C-terminus: uncharacterized protein (437 aa).

Ser-290 and Ser-293 each carry phosphoserine. Residue Thr-296 is modified to Phosphothreonine. Ser-418 and Ser-428 each carry phosphoserine.

This is an uncharacterized protein from Schizosaccharomyces pombe (strain 972 / ATCC 24843) (Fission yeast).